Consider the following 309-residue polypeptide: Dicarboxylate carrier SLC25A8 (309 aa).

Over 1-16 (MVGFKATDVPPTATVK) the chain is Mitochondrial intermembrane. Solcar repeat units lie at residues 11 to 106 (PTAT…VKQF), 114 to 203 (ASIG…IKDA), and 212 to 297 (DDLP…LKRA). Residues 16–63 (KFLGAGTAACIADLITFPLDTAKVRLQIQGESQGPVRATASAQYRGVM) form an important for interaction with long-chain fatty acids region. The chain crosses the membrane as a helical span at residues 17 to 40 (FLGAGTAACIADLITFPLDTAKVR). At 41 to 77 (LQIQGESQGPVRATASAQYRGVMGTILTMVRTEGPRS) the chain is on the mitochondrial matrix side. A helical membrane pass occupies residues 78–103 (LYNGLVAGLQRQMSFASVRIGLYDSV). The Mitochondrial intermembrane segment spans residues 104–119 (KQFYTKGSEHASIGSR). A helical membrane pass occupies residues 120-145 (LLAGSTTGALAVAVAQPTDVVKVRFQ). Residues 146–173 (AQARAGGGRRYQSTVNAYKTIAREEGFR) lie on the Mitochondrial matrix side of the membrane. Residues 174–199 (GLWKGTSPNVARNAIVNCAELVTYDL) traverse the membrane as a helical segment. Residues 200 to 217 (IKDALLKANLMTDDLPCH) lie on the Mitochondrial intermembrane side of the membrane. The chain crosses the membrane as a helical span at residues 218 to 242 (FTSAFGAGFCTTVIASPVDVVKTRY). The Mitochondrial matrix segment spans residues 243-268 (MNSALGQYSSAGHCALTMLQKEGPRA). Residues 269–294 (FYKGFMPSFLRLGSWNVVMFVTYEQL) traverse the membrane as a helical segment. The tract at residues 278–285 (LRLGSWNV) is important for interaction with long-chain fatty acids. The Mitochondrial intermembrane segment spans residues 295–309 (KRALMAACTSREAPF).

This sequence belongs to the mitochondrial carrier (TC 2.A.29) family. As to quaternary structure, homotetramer. Adopts an asymmetrical dimer of dimers functional form. Widely expressed in adult human tissues, including tissues rich in macrophages. Most expressed in white adipose tissue and skeletal muscle.

Its subcellular location is the mitochondrion inner membrane. It catalyses the reaction L-aspartate(out) + phosphate(in) + H(+)(in) = L-aspartate(in) + phosphate(out) + H(+)(out). The enzyme catalyses oxaloacetate(out) + phosphate(in) + H(+)(in) = oxaloacetate(in) + phosphate(out) + H(+)(out). It carries out the reaction (S)-malate(out) + phosphate(in) + H(+)(in) = (S)-malate(in) + phosphate(out) + H(+)(out). The catalysed reaction is malonate(out) + phosphate(in) + H(+)(in) = malonate(in) + phosphate(out) + H(+)(out). It catalyses the reaction sulfate(out) + phosphate(in) + H(+)(in) = sulfate(in) + phosphate(out) + H(+)(out). The enzyme catalyses (S)-malate(out) = (S)-malate(in). It carries out the reaction L-aspartate(out) = L-aspartate(in). The catalysed reaction is phosphate(in) = phosphate(out). It catalyses the reaction chloride(in) = chloride(out). The enzyme catalyses H(+)(in) = H(+)(out). It carries out the reaction a long-chain fatty acid(out) = a long-chain fatty acid(in). Its activity is regulated as follows. Inhibited by pyridoxal- 5'-phosphate, bathophenanthroline, tannic acid, bromocresol purple, butylmalonate and phenylsuccinate. Proton conductance is activated by cardiolipin and long-chain free fatty acids and inhibited by purine nucleotides ATP and ADP. Chloride ion transporter activity is inhibited by long-chain free fatty acids. Functionally, antiporter that exports dicarboxylate intermediates of the Krebs cycle in exchange for phosphate plus a proton across the inner membrane of mitochondria, a process driven by mitochondrial motive force with an overall impact on glycolysis, glutaminolysis and glutathione-dependent redox balance. Continuous export of oxaloacetate and related four-carbon dicarboxylates from mitochondrial matrix into the cytosol negatively regulates the oxidation of acetyl-CoA substrates via the Krebs cycle, lowering the ATP/ADP ratio and reactive oxygen species (ROS) production. May mediate inducible proton entry into the mitochondrial matrix affecting ATP turnover as a protection mechanism against oxidative stress. The proton currents are most likely associated with fatty acid flipping across the inner membrane of mitochondria in a metabolic process regulated by free fatty acids and purine nucleotides. Regulates the use of glucose as a source of energy. Required for glucose-induced DRP1-dependent mitochondrial fission and neuron activation in the ventromedial nucleus of the hypothalamus (VMH). This mitochondrial adaptation mechanism modulates the VMH pool of glucose-excited neurons with an impact on systemic glucose homeostasis. Regulates ROS levels and metabolic reprogramming of macrophages during the resolution phase of inflammation. Attenuates ROS production in response to IL33 to preserve the integrity of the Krebs cycle required for persistent production of itaconate and subsequent GATA3-dependent differentiation of inflammation-resolving alternatively activated macrophages. Can unidirectionally transport anions including L-malate, L-aspartate, phosphate and chloride ions. Does not mediate adaptive thermogenesis. The chain is Dicarboxylate carrier SLC25A8 (UCP2) from Homo sapiens (Human).